The following is a 175-amino-acid chain: MAEAFTSFTFTNLHIPSSYNHSPKQNSGPNHGYWLSKNVNEKRERNLMRGSLCVRKALPHDLPLMAVMVQQIEGMRDIITEKHVWHLSDKAIKNVYMFYIMFTCWGCLYFGSAKDPFYDSEEYRGDGGDGTGYWVYETQEDIEEKARAELWREELIEEIEQKVGGLRELEEAVTK.

A chloroplast-targeting transit peptide spans 1–24 (MAEAFTSFTFTNLHIPSSYNHSPK). A helical transmembrane segment spans residues 95 to 111 (VYMFYIMFTCWGCLYFG).

Part of the chloroplast NDH complex, composed of a mixture of chloroplast and nucleus encoded subunits. Component of the NDH subcomplex B, at least composed of PnsB1, PnsB2, PnsB3, PnsB4 and PnsB5.

The protein localises to the plastid. It is found in the chloroplast thylakoid membrane. NDH shuttles electrons from NAD(P)H:plastoquinone, via FMN and iron-sulfur (Fe-S) centers, to quinones in the photosynthetic chain and possibly in a chloroplast respiratory chain. The immediate electron acceptor for the enzyme in this species is believed to be plastoquinone. Couples the redox reaction to proton translocation, and thus conserves the redox energy in a proton gradient. This chain is Photosynthetic NDH subunit of subcomplex B 4, chloroplastic, found in Arabidopsis thaliana (Mouse-ear cress).